Consider the following 129-residue polypeptide: Large ribosomal subunit protein uL14m (129 aa).

The protein belongs to the universal ribosomal protein uL14 family.

It localises to the mitochondrion. This chain is Large ribosomal subunit protein uL14m (RPL14), found in Acanthamoeba castellanii (Amoeba).